Here is a 208-residue protein sequence, read N- to C-terminus: Probable GTP-binding protein EngB (208 aa).

The EngB-type G domain occupies 25–199 (TGIEVAFAGR…RQKLDSWYNG (175 aa)). Residues 33–40 (GRSNAGKS), 60–64 (GRTQL), 78–81 (DLPG), 145–148 (TKSD), and 178–180 (FSS) contribute to the GTP site. Ser40 and Thr62 together coordinate Mg(2+).

Belongs to the TRAFAC class TrmE-Era-EngA-EngB-Septin-like GTPase superfamily. EngB GTPase family. Mg(2+) serves as cofactor.

Necessary for normal cell division and for the maintenance of normal septation. This Enterobacter sp. (strain 638) protein is Probable GTP-binding protein EngB.